The chain runs to 874 residues: Eukaryotic translation initiation factor 3 subunit C (874 aa).

The tract at residues 1 to 70 (MSRFFVSGYT…DGRPSGPAYF (70 aa)) is disordered. A compositionally biased stretch (acidic residues) spans 14–61 (SSEEEDLLSTSEEELLSSSDEGEDNESDSSFFGEDDDESEESSSDDED). In terms of domain architecture, PCI spans 598-774 (FHQHINLELL…KFISFTSTTE (177 aa)). The tract at residues 797 to 874 (KNEKTQSNGY…SNNDEFQATA (78 aa)) is disordered. Residues 813–848 (KDQQNQQQQNQNQNQQQQQNQQQQQQQQSSQQQSNN) show a composition bias toward low complexity. Residues 862-874 (NVNSNNDEFQATA) are compositionally biased toward polar residues.

This sequence belongs to the eIF-3 subunit C family. As to quaternary structure, component of the eukaryotic translation initiation factor 3 (eIF-3) complex.

The protein localises to the cytoplasm. Its function is as follows. Component of the eukaryotic translation initiation factor 3 (eIF-3) complex, which is involved in protein synthesis of a specialized repertoire of mRNAs and, together with other initiation factors, stimulates binding of mRNA and methionyl-tRNAi to the 40S ribosome. The eIF-3 complex specifically targets and initiates translation of a subset of mRNAs involved in cell proliferation. In Candida albicans (strain SC5314 / ATCC MYA-2876) (Yeast), this protein is Eukaryotic translation initiation factor 3 subunit C.